The chain runs to 211 residues: Arginine exporter protein ArgO (211 aa).

6 consecutive transmembrane segments (helical) span residues 1 to 21, 37 to 57, 68 to 88, 111 to 131, 147 to 167, and 186 to 206; these read MLSYYFQGLVLGAAMILPLGP, LMIAMLCAVSDLLLICAGIFG, LLALVTWGGVAFLLWYGFGAL, IIATMLAVTWLNPHVYLDTFV, WFALGTVSASFLWFFGLALLA, and LVGLVMWFIAFQLAKEGIHHI.

It belongs to the LysE/ArgO transporter (TC 2.A.75) family.

It is found in the cell inner membrane. It carries out the reaction L-arginine(in) = L-arginine(out). Functionally, involved in the export of arginine. Important to control the intracellular level of arginine and the correct balance between arginine and lysine. The protein is Arginine exporter protein ArgO of Enterobacter sp. (strain 638).